A 327-amino-acid chain; its full sequence is L-lactate dehydrogenase (327 aa).

NAD(+) contacts are provided by residues Val-18, Asp-39, Lys-44, Tyr-69, and 83-84; that span reads GA. Residues Gln-86, Arg-92, and 124–127 each bind substrate; that span reads NPVD. Residues 122–124 and Ser-147 contribute to the NAD(+) site; that span reads AAN. A substrate-binding site is contributed by 152–155; it reads DSAR. Arg-157 and His-172 together coordinate beta-D-fructose 1,6-bisphosphate. The active-site Proton acceptor is the His-179. Tyr-224 bears the Phosphotyrosine mark. Thr-233 contacts substrate.

Belongs to the LDH/MDH superfamily. LDH family. In terms of assembly, homotetramer.

It is found in the cytoplasm. It catalyses the reaction (S)-lactate + NAD(+) = pyruvate + NADH + H(+). The protein operates within fermentation; pyruvate fermentation to lactate; (S)-lactate from pyruvate: step 1/1. Its activity is regulated as follows. Allosterically activated by fructose 1,6-bisphosphate (FBP). In terms of biological role, catalyzes the conversion of lactate to pyruvate. This Streptococcus equi subsp. equi (strain 4047) protein is L-lactate dehydrogenase.